The chain runs to 318 residues: Methionyl-tRNA formyltransferase (318 aa).

113–116 provides a ligand contact to (6S)-5,6,7,8-tetrahydrofolate; sequence SLLP.

Belongs to the Fmt family.

The enzyme catalyses L-methionyl-tRNA(fMet) + (6R)-10-formyltetrahydrofolate = N-formyl-L-methionyl-tRNA(fMet) + (6S)-5,6,7,8-tetrahydrofolate + H(+). Its function is as follows. Attaches a formyl group to the free amino group of methionyl-tRNA(fMet). The formyl group appears to play a dual role in the initiator identity of N-formylmethionyl-tRNA by promoting its recognition by IF2 and preventing the misappropriation of this tRNA by the elongation apparatus. The sequence is that of Methionyl-tRNA formyltransferase from Hahella chejuensis (strain KCTC 2396).